Here is an 858-residue protein sequence, read N- to C-terminus: Leucine--tRNA ligase (858 aa).

The 'HIGH' region signature appears at 53–63 (PYPSGNLHMGH). The 'KMSKS' region motif lies at 622 to 626 (KMSKS). An ATP-binding site is contributed by Lys-625.

The protein belongs to the class-I aminoacyl-tRNA synthetase family.

Its subcellular location is the cytoplasm. The catalysed reaction is tRNA(Leu) + L-leucine + ATP = L-leucyl-tRNA(Leu) + AMP + diphosphate. This chain is Leucine--tRNA ligase, found in Prochlorococcus marinus subsp. pastoris (strain CCMP1986 / NIES-2087 / MED4).